A 248-amino-acid chain; its full sequence is 3-oxoacyl-[acyl-carrier-protein] reductase FabG (248 aa).

Residues 14-17, 65-66, and Asn92 contribute to the NADP(+) site; these read GGSR and DV. Ser144 is a binding site for substrate. Tyr157 (proton acceptor) is an active-site residue. NADP(+) contacts are provided by residues 157-161 and Ile190; that span reads YAAAK.

Belongs to the short-chain dehydrogenases/reductases (SDR) family. As to quaternary structure, homotetramer.

It carries out the reaction a (3R)-hydroxyacyl-[ACP] + NADP(+) = a 3-oxoacyl-[ACP] + NADPH + H(+). The protein operates within lipid metabolism; fatty acid biosynthesis. Functionally, catalyzes the NADPH-dependent reduction of beta-ketoacyl-ACP substrates to beta-hydroxyacyl-ACP products, the first reductive step in the elongation cycle of fatty acid biosynthesis. The protein is 3-oxoacyl-[acyl-carrier-protein] reductase FabG (fabG) of Chlamydia trachomatis serovar D (strain ATCC VR-885 / DSM 19411 / UW-3/Cx).